Reading from the N-terminus, the 247-residue chain is NAD(P)H-quinone oxidoreductase subunit K (247 aa).

Positions 63, 64, 128, and 159 each coordinate [4Fe-4S] cluster.

It belongs to the complex I 20 kDa subunit family. As to quaternary structure, NDH-1 can be composed of about 15 different subunits; different subcomplexes with different compositions have been identified which probably have different functions. Requires [4Fe-4S] cluster as cofactor.

Its subcellular location is the cellular thylakoid membrane. It catalyses the reaction a plastoquinone + NADH + (n+1) H(+)(in) = a plastoquinol + NAD(+) + n H(+)(out). It carries out the reaction a plastoquinone + NADPH + (n+1) H(+)(in) = a plastoquinol + NADP(+) + n H(+)(out). NDH-1 shuttles electrons from an unknown electron donor, via FMN and iron-sulfur (Fe-S) centers, to quinones in the respiratory and/or the photosynthetic chain. The immediate electron acceptor for the enzyme in this species is believed to be plastoquinone. Couples the redox reaction to proton translocation, and thus conserves the redox energy in a proton gradient. Cyanobacterial NDH-1 also plays a role in inorganic carbon-concentration. This chain is NAD(P)H-quinone oxidoreductase subunit K, found in Microcystis aeruginosa (strain NIES-843 / IAM M-2473).